The following is a 227-amino-acid chain: Peroxiredoxin 1 (227 aa).

The 156-residue stretch at 6–161 (PLIGEKFPEM…ILRLIKSLQM (156 aa)) folds into the Thioredoxin domain. The active-site Cysteine sulfenic acid (-SOH) intermediate is cysteine 48. Residue arginine 124 coordinates substrate.

The protein belongs to the peroxiredoxin family. Prx6 subfamily. In terms of assembly, homodecamer. Pentamer of dimers that assemble into a ring structure.

It is found in the cytoplasm. The catalysed reaction is a hydroperoxide + [thioredoxin]-dithiol = an alcohol + [thioredoxin]-disulfide + H2O. Thiol-specific peroxidase that catalyzes the reduction of hydrogen peroxide and organic hydroperoxides to water and alcohols, respectively. Plays a role in cell protection against oxidative stress by detoxifying peroxides. The sequence is that of Peroxiredoxin 1 from Picrophilus torridus (strain ATCC 700027 / DSM 9790 / JCM 10055 / NBRC 100828 / KAW 2/3).